The sequence spans 144 residues: Snaclec 6 (144 aa).

The N-terminal stretch at 1-23 (MGRFISVSFGLLVVFLSLSGTGA) is a signal peptide. Disulfide bonds link Cys25/Cys36, Cys53/Cys142, and Cys119/Cys134. The region spanning 32–143 (HEGHCYKVFK…CNFIAPVVCK (112 aa)) is the C-type lectin domain.

It belongs to the snaclec family. In terms of assembly, heterodimer; disulfide-linked.

It is found in the secreted. Functionally, interferes with one step of hemostasis (modulation of platelet aggregation, or coagulation cascade, for example). The sequence is that of Snaclec 6 from Daboia siamensis (Eastern Russel's viper).